We begin with the raw amino-acid sequence, 586 residues long: Phosphomethylpyrimidine synthase (586 aa).

The segment at 1–58 (MKQSVSAEQIELKSSLPGSKKVYVDGTREGMKVPMREIEQSDTNGVQNPPIRVYDTSG) is disordered. A compositionally biased stretch (basic and acidic residues) spans 22–39 (VYVDGTREGMKVPMREIE). Residues Asn-193, Met-222, Tyr-251, His-287, 307-309 (SRG), 348-351 (DGLR), and Glu-387 each bind substrate. Residue His-391 coordinates Zn(2+). Substrate is bound at residue Tyr-414. Residue His-455 coordinates Zn(2+). Positions 535, 538, and 543 each coordinate [4Fe-4S] cluster.

This sequence belongs to the ThiC family. Requires [4Fe-4S] cluster as cofactor.

It catalyses the reaction 5-amino-1-(5-phospho-beta-D-ribosyl)imidazole + S-adenosyl-L-methionine = 4-amino-2-methyl-5-(phosphooxymethyl)pyrimidine + CO + 5'-deoxyadenosine + formate + L-methionine + 3 H(+). The protein operates within cofactor biosynthesis; thiamine diphosphate biosynthesis. Catalyzes the synthesis of the hydroxymethylpyrimidine phosphate (HMP-P) moiety of thiamine from aminoimidazole ribotide (AIR) in a radical S-adenosyl-L-methionine (SAM)-dependent reaction. This Bacillus mycoides (strain KBAB4) (Bacillus weihenstephanensis) protein is Phosphomethylpyrimidine synthase.